The sequence spans 325 residues: Intelectin (325 aa).

The signal sequence occupies residues M1–A23. The 223-residue stretch at I44 to K266 folds into the Fibrinogen C-terminal domain. C53 and C82 are oxidised to a cystine. Residues H98, E99, N101, G104, G109, D110, D145, E274, E286, and D294 each coordinate Ca(2+). 2 disulfides stabilise this stretch: C106-C292 and C262-C277. A carbohydrate contacts are provided by residues E274 to H275 and E286.

In terms of tissue distribution, expressed at high levels in caudal kidney, liver, and swim bladder. Also expressed in gill, spleen, intestine and head kidney. Not detected in heart.

Functionally, may be involved in innate immune surveillance. May specifically recognize carbohydrate chains of pathogens and bacterial components in a calcium-dependent manner. In vitro binds N-acetylglucosamine residues. This chain is Intelectin, found in Oncorhynchus mykiss (Rainbow trout).